Consider the following 165-residue polypeptide: MGPLPVCLPIMLLLLLPSLLLLLLLPGPGSGEASRILRVHRRGILELAGTVGCVGPRTPIAYMKYGCFCGLGGHGQPRDAIDWCCHGHDCCYTRAEEAGCSPKTERYSWQCVNQSVLCGPAENKCQELLCKCDQEIANCLAQTEYNLKYLFYPQFLCEPDSPKCD.

A signal peptide spans 1–31 (MGPLPVCLPIMLLLLLPSLLLLLLLPGPGSG). Positions 32–42 (EASRILRVHRR) are excised as a propeptide. Disulfide bonds link Cys53–Cys111, Cys67–Cys157, Cys69–Cys85, Cys84–Cys139, Cys90–Cys164, Cys91–Cys132, Cys100–Cys125, and Cys118–Cys130. 3 residues coordinate Ca(2+): Phe68, Gly70, and Gly72. The active site involves His88. Asp89 contributes to the Ca(2+) binding site. Asn113 carries N-linked (GlcNAc...) asparagine glycosylation. Residue Asp133 is part of the active site.

This sequence belongs to the phospholipase A2 family. In terms of assembly, interacts with PLA2R1; this interaction mediates PLA2G10 clearance and inactivation. Ca(2+) serves as cofactor. Found in spleen, thymus, peripheral blood leukocytes, pancreas, lung, and colon. Expressed in neuronal fibers in dorsal root ganglia and in peripheral tissues including stomach, white adipose tissue and prostate (at protein level).

The protein localises to the secreted. Its subcellular location is the lysosome. The protein resides in the cytoplasmic vesicle. It localises to the secretory vesicle. It is found in the acrosome. It carries out the reaction a 1,2-diacyl-sn-glycero-3-phosphocholine + H2O = a 1-acyl-sn-glycero-3-phosphocholine + a fatty acid + H(+). It catalyses the reaction 1-hexadecanoyl-2-(9Z-octadecenoyl)-sn-glycero-3-phosphocholine + H2O = 1-hexadecanoyl-sn-glycero-3-phosphocholine + (9Z)-octadecenoate + H(+). The catalysed reaction is 1-octadecanoyl-2-(5Z,8Z,11Z,14Z-eicosatetraenoyl)-sn-glycero-3-phosphocholine + H2O = 1-octadecanoyl-sn-glycero-3-phosphocholine + (5Z,8Z,11Z,14Z)-eicosatetraenoate + H(+). The enzyme catalyses 1,2-dihexadecanoyl-sn-glycero-3-phosphocholine + H2O = 1-hexadecanoyl-sn-glycero-3-phosphocholine + hexadecanoate + H(+). It carries out the reaction 1-hexadecanoyl-2-(9Z-octadecenoyl)-sn-glycero-3-phosphoglycerol + H2O = 1-hexadecanoyl-sn-glycero-3-phosphoglycerol + (9Z)-octadecenoate + H(+). It catalyses the reaction 1,2-dihexadecanoyl-sn-glycero-3-phospho-(1'-sn-glycerol) + H2O = 1-hexadecanoyl-sn-glycero-3-phospho-(1'-sn-glycerol) + hexadecanoate + H(+). The catalysed reaction is 1-hexadecanoyl-2-(9Z-octadecenoyl)-sn-glycero-3-phospho-L-serine + H2O = 1-hexadecanoyl-sn-glycero-3-phospho-L-serine + (9Z)-octadecenoate + H(+). The enzyme catalyses 1-hexadecanoyl-2-(9Z,12Z-octadecadienoyl)-sn-glycero-3-phosphoethanolamine + H2O = 1-hexadecanoyl-sn-glycero-3-phosphoethanolamine + (9Z,12Z)-octadecadienoate + H(+). It carries out the reaction 1-hexadecanoyl-2-(9Z-octadecenoyl)-sn-glycero-3-phosphate + H2O = 1-hexadecanoyl-sn-glycero-3-phosphate + (9Z)-octadecenoate + H(+). It catalyses the reaction 1-O-hexadecyl-2-acetyl-sn-glycero-3-phosphocholine + H2O = 1-O-hexadecyl-sn-glycero-3-phosphocholine + acetate + H(+). Its activity is regulated as follows. Inhibited by methyl indoxam. Functionally, secretory calcium-dependent phospholipase A2 that primarily targets extracellular phospholipids. Hydrolyzes the ester bond of the fatty acyl group attached at sn-2 position of phospholipids with preference for phosphatidylcholines and phosphatidylglycerols over phosphatidylethanolamines. Preferentially releases sn-2 omega-6 and omega-3 polyunsaturated fatty acyl (PUFA) chains over saturated fatty acyls. Contributes to phospholipid remodeling of very low-density lipoprotein (VLDL), low-density lipoprotein (LDL) and high-density lipoprotein (HDL) particles. Hydrolyzes LDL phospholipids releasing unsaturated fatty acids that regulate macrophage differentiation toward foam cells. Efficiently hydrolyzes and inactivates platelet activating factor (PAF), a potent lipid mediator present in oxidized LDL. May act in an autocrine and paracrine manner. Secreted by lung epithelium, targets membrane phospholipids of infiltrating eosinophils, releasing arachidonate and boosting eicosanoid and cysteinyl leukotriene synthesis involved in airway inflammatory response. Secreted by gut epithelium, hydrolyzes dietary and biliary phosphatidylcholines in the gastrointestinal lumen. Plays a stem cell regulator role in colon epithelium. Within intracellular compartment, mediates Paneth-like cell differentiation and its stem cell supporting functions by inhibiting the Wnt signaling pathway in intestinal stem cell (ISC). Secreted in the intestinal lumen upon inflammation, acts in an autocrine way and promotes prostaglandin E2 synthesis that stimulates Wnt signaling pathway in ISCs and tissue regeneration. May participate in hair follicle morphogenesis by regulating phosphatidylethanolamines metabolism at the outermost epithelial layer and facilitating melanin synthesis. By releasing lysophosphatidylcholines (LPCs) at sperm acrosome, controls sperm cell capacitation, acrosome reaction and overall fertility. May promote neurite outgrowth in neuron fibers involved in nociception. Contributes to lipid remodeling of cellular membranes and generation of lipid mediators involved in pathogen clearance. Cleaves sn-2 fatty acyl chains of phosphatidylglycerols and phosphatidylethanolamines, which are major components of membrane phospholipids in bacteria. Displays bactericidal activity against Gram-positive bacteria by directly hydrolyzing phospholipids of the bacterial membrane. In pulmonary epithelium, may contribute to host defense response against adenoviral infection. Prevents adenovirus entry into host cells by hydrolyzing host cell plasma membrane, releasing C16:0 LPCs that inhibit virus-mediated membrane fusion and viral infection. Likely prevents adenoviral entry into the endosomes of host cells. May play a role in maturation and activation of innate immune cells including macrophages, group 2 innate lymphoid cells and mast cells. The chain is Group 10 secretory phospholipase A2 (PLA2G10) from Homo sapiens (Human).